The chain runs to 304 residues: MSASNSWFHLKVPASSANLGPGFDALGLALGVYLTCRFRHSATLSITAAGRDACGIPASPDNLIWQTALTVARNQRMTMPPIELEIHNEIPLGKGMGSSAAALTAGVVIADELLDLGWKPLRILDEAARLEGHPDNVAPCTLGSIVASAIDSGGVTRAVRLPLPKSFDLAIVVPDFDLPTAKARAVLPSGYSREDAVFNVQRAALLIAALATGTTNVFPAAIEDRFHQPYREALVPGLHEILRLRAPGLLGCALSGAGPSILVFFERGYESVCELVEQIFRLNGHASETLHCSIPERGFELTRA.

Residue 91–101 (PLGKGMGSSAA) participates in ATP binding.

Belongs to the GHMP kinase family. Homoserine kinase subfamily.

It is found in the cytoplasm. It carries out the reaction L-homoserine + ATP = O-phospho-L-homoserine + ADP + H(+). The protein operates within amino-acid biosynthesis; L-threonine biosynthesis; L-threonine from L-aspartate: step 4/5. Its function is as follows. Catalyzes the ATP-dependent phosphorylation of L-homoserine to L-homoserine phosphate. The chain is Homoserine kinase from Solibacter usitatus (strain Ellin6076).